Consider the following 444-residue polypeptide: MSEMTPREIVKELDRFIIGQKKAKRAVAIALRNRWRRMKLNKELRYEITPKNILMIGPTGVGKTEIARRLAKLAKAPFIKVEATKFTEIGYVGKEVDSIIRDLTDSAIKMIKSTAIKKNKKRAKELAEERILDVLVPTIKNNWKKTNTNNNSEATLQIFRKKLREGTLDDKEIEINVAVTPMGIEIMAPPGMEELTNQLQSLFQNLTGNKRNIKKLKIKDAMKLLIEEEAAKLINLEELKKEAIYAVEQHGIVFIDEIDKICRNHGSSGPDISREGVQRDLLPLIEGCTVSTKHGMVKTDHILFIASGAFQVSTPSDLIPELQGRLPIRVELQALTINDFELILTEPKASVTMQYQALLKTEKVKINFTKEGIRHIAEAAWKVNESMENIGARRLHTVLERLMEDISFHASDHRNEITITIDEKYVQKHLDKLISNEDLSRFIL.

Residues I18, 60 to 65 (GVGKTE), D256, E321, and R393 each bind ATP.

The protein belongs to the ClpX chaperone family. HslU subfamily. As to quaternary structure, a double ring-shaped homohexamer of HslV is capped on each side by a ring-shaped HslU homohexamer. The assembly of the HslU/HslV complex is dependent on binding of ATP.

Its subcellular location is the cytoplasm. In terms of biological role, ATPase subunit of a proteasome-like degradation complex; this subunit has chaperone activity. The binding of ATP and its subsequent hydrolysis by HslU are essential for unfolding of protein substrates subsequently hydrolyzed by HslV. HslU recognizes the N-terminal part of its protein substrates and unfolds these before they are guided to HslV for hydrolysis. In Buchnera aphidicola subsp. Baizongia pistaciae (strain Bp), this protein is ATP-dependent protease ATPase subunit HslU.